Consider the following 555-residue polypeptide: CTP synthase (555 aa).

The segment at 1-267 (MTKFVFVTGG…AQQVLKFMHL (267 aa)) is amidoligase domain. CTP is bound at residue S13. Residue S13 participates in UTP binding. ATP-binding positions include 14-19 (SIGKGI) and D71. Residues D71 and E141 each coordinate Mg(2+). CTP-binding positions include 148–150 (DIE), 188–193 (KTKPTQ), and K224. UTP is bound by residues 188-193 (KTKPTQ) and K224. A242 contributes to the ATP binding site. The Glutamine amidotransferase type-1 domain maps to 299–535 (YVQLSDAYLS…VGACLADNGN (237 aa)). Residue G354 coordinates L-glutamine. C381 (nucleophile; for glutamine hydrolysis) is an active-site residue. Residues 382-385 (LGMQ), E405, and R463 contribute to the L-glutamine site. Catalysis depends on residues H508 and E510. Positions 536-555 (NANHHDSTPAEPLVSEPLSS) are disordered.

The protein belongs to the CTP synthase family. As to quaternary structure, homotetramer.

The catalysed reaction is UTP + L-glutamine + ATP + H2O = CTP + L-glutamate + ADP + phosphate + 2 H(+). It catalyses the reaction L-glutamine + H2O = L-glutamate + NH4(+). It carries out the reaction UTP + NH4(+) + ATP = CTP + ADP + phosphate + 2 H(+). The protein operates within pyrimidine metabolism; CTP biosynthesis via de novo pathway; CTP from UDP: step 2/2. With respect to regulation, allosterically activated by GTP, when glutamine is the substrate; GTP has no effect on the reaction when ammonia is the substrate. The allosteric effector GTP functions by stabilizing the protein conformation that binds the tetrahedral intermediate(s) formed during glutamine hydrolysis. Inhibited by the product CTP, via allosteric rather than competitive inhibition. Catalyzes the ATP-dependent amination of UTP to CTP with either L-glutamine or ammonia as the source of nitrogen. Regulates intracellular CTP levels through interactions with the four ribonucleotide triphosphates. The protein is CTP synthase of Acaryochloris marina (strain MBIC 11017).